Here is a 330-residue protein sequence, read N- to C-terminus: DNA primase small subunit PriS (330 aa).

Catalysis depends on residues Asp101 and Asp103. Residues Cys116, Cys119, Cys128, and Asp131 each coordinate Zn(2+). Asp235 is an active-site residue.

The protein belongs to the eukaryotic-type primase small subunit family. Heterodimer of a small subunit (PriS) and a large subunit (PriL). It depends on Mg(2+) as a cofactor. The cofactor is Mn(2+).

In terms of biological role, catalytic subunit of DNA primase, an RNA polymerase that catalyzes the synthesis of short RNA molecules used as primers for DNA polymerase during DNA replication. The small subunit contains the primase catalytic core and has DNA synthesis activity on its own. Binding to the large subunit stabilizes and modulates the activity, increasing the rate of DNA synthesis while decreasing the length of the DNA fragments, and conferring RNA synthesis capability. The DNA polymerase activity may enable DNA primase to also catalyze primer extension after primer synthesis. May also play a role in DNA repair. The chain is DNA primase small subunit PriS from Saccharolobus islandicus (strain Y.N.15.51 / Yellowstone #2) (Sulfolobus islandicus).